Reading from the N-terminus, the 330-residue chain is Ribosomal RNA small subunit methyltransferase H (330 aa).

S-adenosyl-L-methionine-binding positions include 48-50 (GGH), aspartate 67, leucine 101, aspartate 115, and glutamine 122.

This sequence belongs to the methyltransferase superfamily. RsmH family.

Its subcellular location is the cytoplasm. It carries out the reaction cytidine(1402) in 16S rRNA + S-adenosyl-L-methionine = N(4)-methylcytidine(1402) in 16S rRNA + S-adenosyl-L-homocysteine + H(+). Specifically methylates the N4 position of cytidine in position 1402 (C1402) of 16S rRNA. This is Ribosomal RNA small subunit methyltransferase H from Pseudarthrobacter chlorophenolicus (strain ATCC 700700 / DSM 12829 / CIP 107037 / JCM 12360 / KCTC 9906 / NCIMB 13794 / A6) (Arthrobacter chlorophenolicus).